A 366-amino-acid polypeptide reads, in one-letter code: Prostaglandin F2-alpha receptor (366 aa).

The Extracellular portion of the chain corresponds to 1-31; sequence MSMNSSKQPVSPAAGLIANTTCQTENRLSVF. N-linked (GlcNAc...) asparagine glycosylation is found at Asn4 and Asn19. The helical transmembrane segment at 32–55 threads the bilayer; sequence FSIIFMTVGILSNSLAIAILMKAY. The Cytoplasmic segment spans residues 56–69; that stretch reads QRFRQKSKASFLLL. A helical membrane pass occupies residues 70 to 90; sequence ASGLVITDFFGHLINGGIAVF. The Extracellular segment spans residues 91–109; it reads VYASDKDWIRFDQSNILCS. Residues Cys108 and Cys186 are joined by a disulfide bond. A helical membrane pass occupies residues 110–131; that stretch reads IFGISMVFSGLCPLFLGSAMAI. Topologically, residues 132–152 are cytoplasmic; sequence ERCIGVTNPIFHSTKITSKHV. The helical transmembrane segment at 153-175 threads the bilayer; it reads KMILSGVCMFAVFVAVLPILGHR. At 176–198 the chain is on the extracellular side; the sequence is DYQIQASRTWCFYNTEHIEDWED. Residues 199–224 form a helical membrane-spanning segment; that stretch reads RFYLLFFSFLGLLALGVSFSCNAVTG. Topologically, residues 225 to 250 are cytoplasmic; that stretch reads VTLLRVKFRSQQHRQGRSHHLEMIIQ. Residues 251 to 267 traverse the membrane as a helical segment; sequence LLAIMCVSCVCWSPFLV. Residues 268 to 285 lie on the Extracellular side of the membrane; it reads TMANIAINGNNSPVTCET. Residues 286-307 traverse the membrane as a helical segment; that stretch reads TLFALRMATWNQILDPWVYILL. The Cytoplasmic portion of the chain corresponds to 308-366; the sequence is RKAVLRNLYKLASRCCGVNIISLHIWELSSIKNSLKVAAISESPAAEKESQQASSEAGL.

It belongs to the G-protein coupled receptor 1 family.

It is found in the cell membrane. Its function is as follows. Receptor for prostaglandin F2-alpha (PGF2-alpha). The activity of this receptor is mediated by G proteins which activate a phosphatidylinositol-calcium second messenger system. Initiates luteolysis in the corpus luteum. In Mus musculus (Mouse), this protein is Prostaglandin F2-alpha receptor (Ptgfr).